A 388-amino-acid polypeptide reads, in one-letter code: Omega-hydroxy-beta-dihydromenaquinone-9 sulfotransferase Stf3 (388 aa).

The protein belongs to the Stf3 family.

The enzyme catalyses omega-hydroxy-beta-dihydromenaquinone-9 + 3'-phosphoadenylyl sulfate = omega-sulfo-beta-dihydromenaquinone-9 + adenosine 3',5'-bisphosphate + H(+). Its function is as follows. Involved in the biosynthesis of sulfomenaquinone (SMK, initially named S881 on the basis of its mass), which is localized in the outer envelope of M.bovis and negatively regulates its virulence. Catalyzes the transfer of a sulfonate group from 3'-phosphoadenosine-5'-phosphosulfate (PAPS) to omega-hydroxy-beta-dihydromenaquinone-9, generating omega-sulfo-beta-dihydromenaquinone-9 (sulfomenaquinone). The chain is Omega-hydroxy-beta-dihydromenaquinone-9 sulfotransferase Stf3 from Mycobacterium bovis (strain ATCC BAA-935 / AF2122/97).